Here is a 107-residue protein sequence, read N- to C-terminus: uncharacterized protein (107 aa).

2 helical membrane-spanning segments follow: residues 14–34 (YLAEFLLGLTALFGLYLIVAW) and 68–88 (FFVFLGYVAHIIPFTAFLVPI).

It localises to the cell membrane. This is an uncharacterized protein from Haemophilus influenzae (strain ATCC 51907 / DSM 11121 / KW20 / Rd).